The primary structure comprises 1466 residues: Adhesion G protein-coupled receptor L1 (1466 aa).

Positions 1–28 are cleaved as a signal peptide; it reads MARLAAALWSLCVTTVLVTSATQGLSRA. Over 29 to 852 the chain is Extracellular; that stretch reads GLPFGLMRRE…EIYQGRINEL (824 aa). Residues 40–129 enclose the SUEL-type lectin domain; the sequence is ACEGYPIELR…KYLEVQYDCV (90 aa). Intrachain disulfides connect Cys41–Cys71, Cys50–Cys128, Cys83–Cys115, Cys96–Cys102, and Cys135–Cys317. Alpha-L-rhamnose is bound at residue Glu42. A glycan (N-linked (GlcNAc...) asparagine) is linked at Asn98. Residue 117–120 participates in alpha-L-rhamnose binding; that stretch reads GTYK. The 260-residue stretch at 134-393 folds into the Olfactomedin-like domain; it reads VCPGTLQKVL…VVRYSLEFGP (260 aa). The tract at residues 395 to 463 is disordered; sequence DPSAGPATSP…APAPSTRRPP (69 aa). Over residues 400–436 the composition is skewed to low complexity; that stretch reads PATSPPLSTTTTARPTPLTSTASPAATTPLRRAPLTT. The span at 448-463 shows a compositional bias: pro residues; the sequence is DLPPATAPAPSTRRPP. 2 disulfides stabilise this stretch: Cys475–Cys510 and Cys498–Cys527. Asn526, Asn635, Asn736, Asn795, Asn800, and Asn821 each carry an N-linked (GlcNAc...) asparagine glycan. Positions 664–845 constitute a GAIN-B domain; that stretch reads PARFLAAKQN…AVLMAHREIY (182 aa). 2 cysteine pairs are disulfide-bonded: Cys796/Cys827 and Cys815/Cys829. The GPS stretch occupies residues 796-845; it reads CSFWNYSERSMLGYWSTQGCRLVESNKTHTTCACSHLTNFAVLMAHREIY. The helical transmembrane segment at 853–873 threads the bilayer; sequence LLSVITWVGIVISLVCLAICI. Topologically, residues 874 to 887 are cytoplasmic; sequence STFCFLRGLQTDRN. A helical transmembrane segment spans residues 888 to 908; that stretch reads TIHKNLCINLFLAELLFLVGI. The Extracellular portion of the chain corresponds to 909–914; the sequence is DKTQYE. The helical transmembrane segment at 915–935 threads the bilayer; the sequence is VACPIFAGLLHYFFLAAFSWL. Residues 936-958 are Cytoplasmic-facing; sequence CLEGVHLYLLLVEVFESEYSRTK. Residues 959 to 979 form a helical membrane-spanning segment; the sequence is YYYLGGYCFPALVVGIAAAID. Residues 980–996 lie on the Extracellular side of the membrane; that stretch reads YRSYGTEKACWLRVDNY. The chain crosses the membrane as a helical span at residues 997–1017; the sequence is FIWSFIGPVSFVIVVNLVFLM. Residues 1018–1044 lie on the Cytoplasmic side of the membrane; the sequence is VTLHKMIRSSSVLKPDSSRLDNIKSWA. The helical transmembrane segment at 1045–1065 threads the bilayer; it reads LGAIALLFLLGLTWAFGLLFI. Topologically, residues 1066–1069 are extracellular; sequence NKES. Residues 1070–1090 form a helical membrane-spanning segment; it reads VVMAYLFTTFNAFQGVFIFVF. At 1091-1466 the chain is on the cytoplasmic side; the sequence is HCALQKKVHK…DGQMQLVTSL (376 aa). Arg1188 carries the post-translational modification Omega-N-methylarginine. Ser1214 is subject to Phosphoserine. 4 disordered regions span residues 1242–1267, 1288–1319, 1352–1421, and 1443–1466; these read FNNS…RGRN, RGAS…GPGS, ESES…SRPP, and YLAA…VTSL. Positions 1296 to 1307 are enriched in pro residues; sequence GPPPEPPVPPVP. Phosphoserine is present on Ser1319. The segment covering 1400 to 1412 has biased composition (pro residues); sequence ALPPPPPAPPGPP. Residues Ser1448 and Ser1465 each carry the phosphoserine modification.

It belongs to the G-protein coupled receptor 2 family. Adhesion G-protein coupled receptor (ADGR) subfamily. In terms of assembly, forms a heterodimer, consisting of a large extracellular region (p120) non-covalently linked to a seven-transmembrane moiety (p85). Interacts with syntaxin and with proteins of the SHANK family via the PDZ domain. Interacts (via extracellular domain) with FLRT1, FLRT2 and FLRT3 (via extracellular domain). In terms of processing, autoproteolytically cleaved into 2 subunits, an extracellular subunit and a seven-transmembrane subunit. This proteolytic processing takes place early in the biosynthetic pathway, either in the endoplasmic reticulum or in the early compartment of the Golgi apparatus.

The protein resides in the cell membrane. The protein localises to the cell projection. It localises to the axon. It is found in the growth cone. Its subcellular location is the synapse. The protein resides in the presynaptic cell membrane. The protein localises to the synaptosome. Calcium-independent receptor of high affinity for alpha-latrotoxin, an excitatory neurotoxin present in black widow spider venom which triggers massive exocytosis from neurons and neuroendocrine cells. Receptor for TENM2 that mediates heterophilic synaptic cell-cell contact and postsynaptic specialization. Receptor probably implicated in the regulation of exocytosis. This chain is Adhesion G protein-coupled receptor L1, found in Mus musculus (Mouse).